We begin with the raw amino-acid sequence, 336 residues long: Ventral anterior homeobox 1 (336 aa).

Basic and acidic residues predominate over residues 1–34 (MFGKTDKMDVRCHSDTEAARVSKNAHKESREIKG). Disordered stretches follow at residues 1 to 39 (MFGK…EGSL) and 50 to 69 (AFSA…NSSA). The homeobox DNA-binding region spans 100-159 (PKRTRTSFTAEQLYRLEMEFQRCQYVVGRERTELARQLNLSETQVKVWFQNRRTKQKKDQ). A compositionally biased stretch (low complexity) spans 236–250 (PGPAGAASQHPPAVG). Disordered stretches follow at residues 236–267 (PGPA…HAGA) and 316–336 (SAFE…KALD). Basic and acidic residues predominate over residues 325–336 (NNKEGAEKKALD).

This sequence belongs to the EMX homeobox family.

The protein localises to the nucleus. Its function is as follows. Transcription factor that may function in dorsoventral specification of the forebrain. Required for axon guidance and major tract formation in the developing forebrain. May contribute to the differentiation of the neuroretina, pigmented epithelium and optic stalk. This chain is Ventral anterior homeobox 1 (Vax1), found in Rattus norvegicus (Rat).